The sequence spans 239 residues: Uridylate kinase (239 aa).

Lys13–Gly16 lines the ATP pocket. A UMP-binding site is contributed by Gly55. Gly56 and Arg60 together coordinate ATP. UMP-binding positions include Asp75 and Thr136–Thr143. Thr163, Asn164, Tyr169, and Asp172 together coordinate ATP.

Belongs to the UMP kinase family. In terms of assembly, homohexamer.

Its subcellular location is the cytoplasm. The catalysed reaction is UMP + ATP = UDP + ADP. It participates in pyrimidine metabolism; CTP biosynthesis via de novo pathway; UDP from UMP (UMPK route): step 1/1. Its activity is regulated as follows. Inhibited by UTP. Its function is as follows. Catalyzes the reversible phosphorylation of UMP to UDP. In Neisseria meningitidis serogroup A / serotype 4A (strain DSM 15465 / Z2491), this protein is Uridylate kinase.